Here is a 77-residue protein sequence, read N- to C-terminus: DNA-directed RNA polymerase subunit omega (77 aa).

Belongs to the RNA polymerase subunit omega family. The RNAP catalytic core consists of 2 alpha, 1 beta, 1 beta' and 1 omega subunit. When a sigma factor is associated with the core the holoenzyme is formed, which can initiate transcription.

The enzyme catalyses RNA(n) + a ribonucleoside 5'-triphosphate = RNA(n+1) + diphosphate. Its function is as follows. Promotes RNA polymerase assembly. Latches the N- and C-terminal regions of the beta' subunit thereby facilitating its interaction with the beta and alpha subunits. The sequence is that of DNA-directed RNA polymerase subunit omega from Nitratidesulfovibrio vulgaris (strain ATCC 29579 / DSM 644 / CCUG 34227 / NCIMB 8303 / VKM B-1760 / Hildenborough) (Desulfovibrio vulgaris).